A 291-amino-acid chain; its full sequence is Oligopeptide transport system permease protein OppC (291 aa).

A run of 6 helical transmembrane segments spans residues 22 to 42 (VASLAALLLLFVSAYALPPLL), 85 to 105 (MLIGVCVAVISTGIAATVGAI), 116 to 136 (TLMWVVDLLLVVPSFILIAIV), 142 to 162 (NSANIMFLVLLLAGFGWMISS), 209 to 229 (ALNVAAAILAETGLSFLGFGI), and 247 to 267 (ATAFPWVFLFPASILVLILVC). The 192-residue stretch at 81 to 272 (MQKSMLIGVC…LILVCANLTG (192 aa)) folds into the ABC transmembrane type-1 domain.

The protein belongs to the binding-protein-dependent transport system permease family. OppBC subfamily. As to quaternary structure, the complex is composed of an ATP-binding protein (OppD), two transmembrane proteins (OppB and OppC) and a solute-binding protein (OppA).

It localises to the cell inner membrane. Functionally, part of the ABC transporter complex OppABCD involved in the uptake of oligopeptides. Responsible for the translocation of the substrate across the membrane. This Mycobacterium bovis (strain ATCC BAA-935 / AF2122/97) protein is Oligopeptide transport system permease protein OppC.